The following is a 151-amino-acid chain: Copper transporter 3 (151 aa).

2 helical membrane-spanning segments follow: residues 52-72 (LKMY…SECL) and 103-123 (YLVM…AMAG).

The protein belongs to the copper transporter (Ctr) (TC 1.A.56) family. SLC31A subfamily. As to expression, highly expressed in stems and at lower levels in leaves and flowers.

Its subcellular location is the membrane. In terms of biological role, involved in the transport of copper. In Arabidopsis thaliana (Mouse-ear cress), this protein is Copper transporter 3 (COPT3).